The primary structure comprises 199 residues: Fe/S biogenesis protein NfuA (199 aa).

[4Fe-4S] cluster contacts are provided by cysteine 151 and cysteine 154.

It belongs to the NfuA family. In terms of assembly, homodimer. The cofactor is [4Fe-4S] cluster.

Its function is as follows. Involved in iron-sulfur cluster biogenesis. Binds a 4Fe-4S cluster, can transfer this cluster to apoproteins, and thereby intervenes in the maturation of Fe/S proteins. Could also act as a scaffold/chaperone for damaged Fe/S proteins. The polypeptide is Fe/S biogenesis protein NfuA (Stenotrophomonas maltophilia (strain K279a)).